The following is a 710-amino-acid chain: MEIPPQEAPPGPGADADADAEAEEAPAEAGSSSGASPPTDGRLKAAAKRVTFPSDEDIVSGAVEPKDPWRHAQNVTVDEVISAYRQACQKLNCRQIPKLLRQLQEFTDLEQRINCLDLKGEKLDYKTCEALEEVFKRLQFKVVDLEQTNLDEDGASALFDMIEYYESATHLNISFNKHIGTRGWQAAAHMMRKTSCLQYLDARNTPLLDHSAPFVARALRIRSSLAVLHLENASLSGRPLMLLATALKMNMNLQELYLADNKLNGLQDSAQLGNLLKFNCSLQILDLRNNHVLDSGLAYICEGLKEQRKGLVTLVLWNNQLTHTGMAFLGMALPHTQSLETLNLGHNPIGNEGVRNLKNGLISNRSVLRLGLASTKLTCEGAVAVAEFIAESPRLLRLDLRENEIKTGGLMALSLALKVNHSLLRLDLDREPKKEPVKSFIETQKALLAEIQNGCKRNFVLVREREEKQQLQPSASMPEITITAPQPLEESGDLPAMGAQNGTPGPGPGPDSDSDSDSDREEQEEEEEDQSDQQRDEGGTDQSSSAPCPALLPSTDSLGPGDKSPPGSPSSPTEQRISVSSPGRGHKVFVVTRVESPPERPEPPVPPTSVSSPPPSPPSPPASPPSQTMDTQDPESSEAQPQTEPSQAGQPLPNGLKPEFALALAPEAPPGLEAKGSSCSLEHALHRSHGVSKLEELLLEASQEAPRDTL.

Pro residues predominate over residues Met-1–Pro-12. The segment at Met-1–Ala-46 is disordered. Residues Ala-16 to Pro-26 are compositionally biased toward acidic residues. Residues Ala-27–Pro-38 are compositionally biased toward low complexity. Ser-54 and Ser-60 each carry phosphoserine. LRR repeat units lie at residues Ser-224–Ala-244, Asn-252–Gly-273, Ser-281–Cys-301, Gly-310–Gly-330, and Ser-338–Lys-358. Residues Pro-487 to Ser-677 are disordered. Residues Ser-512–Ser-531 are compositionally biased toward acidic residues. Positions Ser-543–Pro-565 are enriched in low complexity. Ser-581 is modified (phosphoserine). Pro residues predominate over residues Pro-603–Pro-624. Residues Ser-637 to Gly-649 show a composition bias toward polar residues. Low complexity predominate over residues Leu-656–Gly-676.

It belongs to the PPP1R37 family. Interacts with PPP1CA.

Functionally, inhibits phosphatase activity of protein phosphatase 1 (PP1) complexes. This is Protein phosphatase 1 regulatory subunit 37 (Ppp1r37) from Rattus norvegicus (Rat).